The sequence spans 178 residues: uncharacterized protein (178 aa).

5 consecutive transmembrane segments (helical) span residues 1 to 21, 47 to 67, 75 to 95, 117 to 137, and 158 to 178; these read MISI…YGGG, MLAL…AYVG, GFLI…IVLL, VIAV…IKAI, and MHPA…IPYL.

Belongs to the chromate ion transporter (CHR) (TC 2.A.51) family.

The protein resides in the cell membrane. This is an uncharacterized protein from Bacillus subtilis (strain 168).